A 555-amino-acid chain; its full sequence is Bicyclo-germacrene synthase (555 aa).

Mg(2+) contacts are provided by Asp-311 and Glu-315. The DDXXD motif signature appears at 311–315 (DDTYE). Homodimerization regions lie at residues 316–322 (YATLDEL) and 392–429 (EAKW…VGVG). Mg(2+) is bound by residues Asp-459 and Glu-467.

Belongs to the terpene synthase family. As to quaternary structure, homodimer. It depends on Mn(2+) as a cofactor. The cofactor is Mg(2+). Expressed in peltate glandular trichomes. Present at low levels in flowers, leaves and stems.

The catalysed reaction is (2E,6E)-farnesyl diphosphate = bicyclogermacrene + diphosphate. It catalyses the reaction (2E)-geranyl diphosphate = terpinolene + diphosphate. It carries out the reaction (2E)-geranyl diphosphate = (4R)-limonene + diphosphate. The enzyme catalyses (2E)-geranyl diphosphate + H2O = (2E)-geraniol + diphosphate. The catalysed reaction is (2E,6E)-farnesyl diphosphate = allo-aromadendrene + diphosphate. Its pathway is secondary metabolite biosynthesis; terpenoid biosynthesis. Its function is as follows. Involved in the biosynthesis of phenolic sesquiterpenes natural products. Sesquiterpene synthase converting (2E,6E)-farnesyl diphosphate (FPP) to alloaromadendrene and bicyclo-germacrene. The product formation is dependent on the metal ions present and in presence of manganese, bicyclo-germacrene is greatly favored while both alloaromadendrene and bicyclo-germacrene are produced in equivalent amounts in the presence of magnesium. Can also convert geranyl diphosphate (GPP) to terpinolene, limonene and geraniol, and this conversion is not affected by the presence of magnesium or manganese. In Origanum vulgare (Wild marjoram), this protein is Bicyclo-germacrene synthase (TPS4).